The sequence spans 453 residues: tRNA modification GTPase MnmE (453 aa).

Residues arginine 22, glutamate 79, and lysine 119 each contribute to the (6S)-5-formyl-5,6,7,8-tetrahydrofolate site. Positions glycine 215 to glycine 376 constitute a TrmE-type G domain. Asparagine 225 is a binding site for K(+). GTP contacts are provided by residues asparagine 225–serine 230, threonine 244–threonine 250, aspartate 269–glycine 272, and asparagine 334–aspartate 337. Serine 229 is a Mg(2+) binding site. K(+) contacts are provided by threonine 244, isoleucine 246, and threonine 249. Threonine 250 contacts Mg(2+). Lysine 453 lines the (6S)-5-formyl-5,6,7,8-tetrahydrofolate pocket.

Belongs to the TRAFAC class TrmE-Era-EngA-EngB-Septin-like GTPase superfamily. TrmE GTPase family. In terms of assembly, homodimer. Heterotetramer of two MnmE and two MnmG subunits. K(+) serves as cofactor.

Its subcellular location is the cytoplasm. In terms of biological role, exhibits a very high intrinsic GTPase hydrolysis rate. Involved in the addition of a carboxymethylaminomethyl (cmnm) group at the wobble position (U34) of certain tRNAs, forming tRNA-cmnm(5)s(2)U34. The sequence is that of tRNA modification GTPase MnmE from Vibrio vulnificus (strain CMCP6).